The chain runs to 889 residues: Translation initiation factor IF-2 (889 aa).

A disordered region spans residues 1 to 299; the sequence is MTDNKDDKTL…EKFKRSQMQE (299 aa). Over residues 61–76 the composition is skewed to low complexity; that stretch reads ITPVAATPAARPAEQR. Residues 77–93 are compositionally biased toward pro residues; that stretch reads PMPPQPSGRPAPQPQPH. A compositionally biased stretch (basic and acidic residues) spans 116 to 182; it reads MEARRRALAE…EAEKTEEKVE (67 aa). Over residues 196-215 the composition is skewed to low complexity; it reads RPQPGRAAPAATPAAPDGAA. The segment covering 220–231 has biased composition (basic and acidic residues); it reads RGTESEEDERRR. One can recognise a tr-type G domain in the interval 387-554; it reads SRPPIVTIMG…AILLQSEILD (168 aa). The segment at 396 to 403 is G1; that stretch reads GHVDHGKT. 396–403 serves as a coordination point for GTP; that stretch reads GHVDHGKT. Residues 421-425 form a G2 region; the sequence is GITQH. The tract at residues 442–445 is G3; it reads DTPG. Residues 442–446 and 496–499 each bind GTP; these read DTPGH and NKID. Residues 496–499 form a G4 region; sequence NKID. The tract at residues 532-534 is G5; it reads SAK.

This sequence belongs to the TRAFAC class translation factor GTPase superfamily. Classic translation factor GTPase family. IF-2 subfamily.

It localises to the cytoplasm. Its function is as follows. One of the essential components for the initiation of protein synthesis. Protects formylmethionyl-tRNA from spontaneous hydrolysis and promotes its binding to the 30S ribosomal subunits. Also involved in the hydrolysis of GTP during the formation of the 70S ribosomal complex. This Rhizobium meliloti (strain 1021) (Ensifer meliloti) protein is Translation initiation factor IF-2.